Reading from the N-terminus, the 302-residue chain is Bifunctional phosphoglucose/phosphomannose isomerase (302 aa).

One can recognise an SIS domain in the interval 27–160; the sequence is VEGEVVRIEA…KVYGIDVKIP (134 aa). Positions 47, 48, 87, 89, 92, and 135 each coordinate D-fructose 6-phosphate. D-glucose 6-phosphate contacts are provided by G47, S48, S87, S89, T92, and R135. E203 functions as the Proton acceptor in the catalytic mechanism. Positions 219 and 298 each coordinate D-fructose 6-phosphate. H219 and K298 together coordinate D-glucose 6-phosphate. The active-site Proton donor is the H219. K298 acts as the Proton acceptor in catalysis.

The protein belongs to the PGI/PMI family. In terms of assembly, homodimer.

It localises to the cytoplasm. It carries out the reaction alpha-D-glucose 6-phosphate = beta-D-fructose 6-phosphate. The enzyme catalyses D-mannose 6-phosphate = D-fructose 6-phosphate. Inhibited by 5-phosphoarabinonate (PAB) and 6-phosphogluconate. Dual specificity isomerase that catalyzes the isomerization of both glucose-6-phosphate and mannose-6-phosphate to fructose-6-phosphate with similar catalytic efficiency. This is Bifunctional phosphoglucose/phosphomannose isomerase from Pyrobaculum aerophilum (strain ATCC 51768 / DSM 7523 / JCM 9630 / CIP 104966 / NBRC 100827 / IM2).